The primary structure comprises 326 residues: Phospho-N-acetylmuramoyl-pentapeptide-transferase (326 aa).

10 consecutive transmembrane segments (helical) span residues 3–23, 51–71, 77–97, 113–133, 143–163, 175–195, 199–219, 225–245, 250–270, and 306–326; these read LPTK…PYFI, TPTM…LFWV, ILLL…DDYL, ILIQ…YFTE, GIMI…VVGS, GLAA…AYMT, ISVI…LWFN, IFMG…TSVL, VLFA…VIQV, and IVIK…AFLL.

This sequence belongs to the glycosyltransferase 4 family. MraY subfamily. It depends on Mg(2+) as a cofactor.

The protein localises to the cell membrane. The catalysed reaction is UDP-N-acetyl-alpha-D-muramoyl-L-alanyl-gamma-D-glutamyl-meso-2,6-diaminopimeloyl-D-alanyl-D-alanine + di-trans,octa-cis-undecaprenyl phosphate = di-trans,octa-cis-undecaprenyl diphospho-N-acetyl-alpha-D-muramoyl-L-alanyl-D-glutamyl-meso-2,6-diaminopimeloyl-D-alanyl-D-alanine + UMP. It functions in the pathway cell wall biogenesis; peptidoglycan biosynthesis. In terms of biological role, catalyzes the initial step of the lipid cycle reactions in the biosynthesis of the cell wall peptidoglycan: transfers peptidoglycan precursor phospho-MurNAc-pentapeptide from UDP-MurNAc-pentapeptide onto the lipid carrier undecaprenyl phosphate, yielding undecaprenyl-pyrophosphoryl-MurNAc-pentapeptide, known as lipid I. The protein is Phospho-N-acetylmuramoyl-pentapeptide-transferase of Wolbachia sp. subsp. Brugia malayi (strain TRS).